Reading from the N-terminus, the 32-residue chain is Photosystem II reaction center protein T (32 aa).

A helical transmembrane segment spans residues 3–23 (ALVYTFLLIGTLVVIFFAIFF).

This sequence belongs to the PsbT family. In terms of assembly, PSII is composed of 1 copy each of membrane proteins PsbA, PsbB, PsbC, PsbD, PsbE, PsbF, PsbH, PsbI, PsbJ, PsbK, PsbL, PsbM, PsbT, PsbX, PsbY, PsbZ, Psb30/Ycf12, at least 3 peripheral proteins of the oxygen-evolving complex and a large number of cofactors. It forms dimeric complexes.

It localises to the plastid. Its subcellular location is the chloroplast thylakoid membrane. Functionally, found at the monomer-monomer interface of the photosystem II (PS II) dimer, plays a role in assembly and dimerization of PSII. PSII is a light-driven water plastoquinone oxidoreductase, using light energy to abstract electrons from H(2)O, generating a proton gradient subsequently used for ATP formation. The sequence is that of Photosystem II reaction center protein T from Emiliania huxleyi (Coccolithophore).